We begin with the raw amino-acid sequence, 371 residues long: Cytochrome b (371 aa).

The next 4 helical transmembrane spans lie at 25 to 45, 69 to 90, 105 to 125, and 170 to 190; these read FGSM…FLAV, WMMQ…YIHI, WLSG…GYVL, and FSAL…LHIM. 2 residues coordinate heme b: His75 and His89. Positions 174 and 188 each coordinate heme b. His193 is a binding site for a ubiquinone. 4 consecutive transmembrane segments (helical) span residues 218–238, 280–300, 312–332, and 339–358; these read YKDL…VSFL, LGGA…PFTH, IMQL…WSAT, and FTVI…IMNP.

The protein belongs to the cytochrome b family. The cytochrome bc1 complex contains 3 respiratory subunits (MT-CYB, CYC1 and UQCRFS1), 2 core proteins (UQCRC1 and UQCRC2) and probably 6 low-molecular weight proteins. Heme b is required as a cofactor.

The protein resides in the mitochondrion inner membrane. Functionally, component of the ubiquinol-cytochrome c reductase complex (complex III or cytochrome b-c1 complex) that is part of the mitochondrial respiratory chain. The b-c1 complex mediates electron transfer from ubiquinol to cytochrome c. Contributes to the generation of a proton gradient across the mitochondrial membrane that is then used for ATP synthesis. The polypeptide is Cytochrome b (MT-CYB) (Eryx elegans (Central Asian sand boa)).